Consider the following 1177-residue polypeptide: Phospholipid-transporting ATPase IF (1177 aa).

At 1-55 (MWRWIRQQLGFDPPHQSDTRTIYVANRFPQNGLYTPQKFIDNRIISSKYTVWNFV) the chain is on the cytoplasmic side. The chain crosses the membrane as a helical span at residues 56–77 (PKNLFEQFRRVANFYFLIIFLV). At 78 to 82 (QLMID) the chain is on the extracellular side. A helical membrane pass occupies residues 83–104 (TPTSPVTSGLPLFFVITVTAIK). At 105 to 289 (QGYEDWLRHN…SAVEKSMNTF (185 aa)) the chain is on the cytoplasmic side. The chain crosses the membrane as a helical span at residues 290 to 311 (LIIYLVILISEAVISTILKYTW). At 312–341 (QAEEKWDEPWYNQKTEHQRNSSKILRFISD) the chain is on the extracellular side. The chain crosses the membrane as a helical span at residues 342 to 359 (FLAFLVLYNFIIPISLYV). Residues 360 to 876 (TVEMQKFLGS…HGHFYYIRIA (517 aa)) lie on the Cytoplasmic side of the membrane. The 4-aspartylphosphate intermediate role is filled by aspartate 407. Residues aspartate 407, lysine 408, threonine 409, glutamate 531, phenylalanine 572, lysine 595, arginine 626, threonine 706, glycine 707, aspartate 708, arginine 794, and lysine 800 each contribute to the ATP site. Aspartate 407 lines the Mg(2+) pocket. Position 409 (threonine 409) interacts with Mg(2+). Mg(2+) is bound at residue aspartate 821. 2 residues coordinate ATP: asparagine 824 and aspartate 825. Aspartate 825 provides a ligand contact to Mg(2+). Residues 877 to 898 (TLVQYFFYKNVCFITPQFLYQF) form a helical membrane-spanning segment. Over 899 to 910 (YCLFSQQTLYDS) the chain is Extracellular. A helical membrane pass occupies residues 911–930 (VYLTLYNICFTSLPILIYSL). The Cytoplasmic portion of the chain corresponds to 931–960 (LEQHVDPHVLQNKPTLYRDISKNRLLSIKT). Residues 961–982 (FLYWTILGFSHAFIFFFGSYLL) traverse the membrane as a helical segment. Residues 983–997 (IGKDTSLLGNGQMFG) lie on the Extracellular side of the membrane. Residues 998-1020 (NWTFGTLVFTVMVITVTVKMALE) traverse the membrane as a helical segment. The Cytoplasmic segment spans residues 1021-1025 (THFWT). The helical transmembrane segment at 1026–1047 (WINHLVTWGSIIFYFVFSLFYG) threads the bilayer. At 1048 to 1065 (GILWPFLGSQNMYFVFIQ) the chain is on the extracellular side. Residues 1066–1090 (LLSSGSAWFAIILMVVTCLFLDIIK) traverse the membrane as a helical segment. Over 1091 to 1177 (KVFDRHLHPT…TLSTMDSSTC (87 aa)) the chain is Cytoplasmic. Serine 1154 is modified (phosphoserine).

It belongs to the cation transport ATPase (P-type) (TC 3.A.3) family. Type IV subfamily. In terms of assembly, component of a P4-ATPase flippase complex which consists of a catalytic alpha subunit ATP11B and an accessory beta subunit TMEM30A. Mg(2+) is required as a cofactor.

The protein localises to the recycling endosome membrane. Its subcellular location is the early endosome. It localises to the endoplasmic reticulum. The protein resides in the golgi apparatus. It is found in the trans-Golgi network. The enzyme catalyses ATP + H2O + phospholipidSide 1 = ADP + phosphate + phospholipidSide 2.. It catalyses the reaction a 1,2-diacyl-sn-glycero-3-phospho-L-serine(out) + ATP + H2O = a 1,2-diacyl-sn-glycero-3-phospho-L-serine(in) + ADP + phosphate + H(+). It carries out the reaction a 1,2-diacyl-sn-glycero-3-phosphoethanolamine(out) + ATP + H2O = a 1,2-diacyl-sn-glycero-3-phosphoethanolamine(in) + ADP + phosphate + H(+). Its activity is regulated as follows. The ATPase activity is up-regulated by aminophospholipids PS and PE. In terms of biological role, catalytic component of a P4-ATPase flippase complex which catalyzes the hydrolysis of ATP coupled to the transport of aminophospholipids, phosphatidylserines (PS) and phosphatidylethanolamines (PE), from the outer to the inner leaflet of intracellular membranes. May contribute to the maintenance of membrane lipid asymmetry in endosome compartment. The polypeptide is Phospholipid-transporting ATPase IF (ATP11B) (Homo sapiens (Human)).